The chain runs to 1413 residues: ABC transporter G family member 33 (1413 aa).

Over residues 1–10 the composition is skewed to low complexity; that stretch reads MGSSFRSSSS. The segment at 1–21 is disordered; sequence MGSSFRSSSSRNEHEDGGDEA. The segment covering 11–21 has biased composition (basic and acidic residues); that stretch reads RNEHEDGGDEA. The 273-residue stretch at 140–412 folds into the ABC transporter 1 domain; it reads LKLSGVRTNE…FEECGFQCPE (273 aa). 172-179 contributes to the ATP binding site; it reads GPPGCGKT. The 213-residue stretch at 490–702 folds into the ABC transmembrane type-2 1 domain; that stretch reads ELFRACISRE…AEIGLSVNEF (213 aa). 6 helical membrane passes run 509–529, 546–566, 580–600, 626–646, 652–672, and 738–758; these read VYLF…TVFI, CLFF…SMTV, FYPA…LSFF, FMIL…IAAI, AAMT…GFAI, and LSAL…ALSF. In terms of domain architecture, ABC transporter 2 spans 813–1065; the sequence is ITFQDLNYYV…CVIEYFQNIP (253 aa). 858–865 contributes to the ATP binding site; sequence GISGAGKT. The ABC transmembrane type-2 2 domain occupies 1138 to 1352; the sequence is EQFKSCLWKM…TLNLFFSSQY (215 aa). 7 consecutive transmembrane segments (helical) span residues 1157–1177, 1189–1209, 1245–1265, 1276–1296, 1302–1322, 1330–1350, and 1385–1405; these read YNLM…LLFW, LFTV…NNCT, IPYI…MIGF, LYAM…LISI, VAAI…GFLI, WWVW…FFSS, and ITAI…AFFV.

Belongs to the ABC transporter superfamily. ABCG family. PDR (TC 3.A.1.205) subfamily. In terms of tissue distribution, expressed in roots and stems.

Its subcellular location is the membrane. In terms of biological role, may be a general defense protein. This is ABC transporter G family member 33 (ABCG33) from Arabidopsis thaliana (Mouse-ear cress).